Here is a 199-residue protein sequence, read N- to C-terminus: Secreted chorismate mutase (199 aa).

Positions Met1 to Ala33 are cleaved as a signal peptide. The Chorismate mutase domain maps to Asp34–Phe113. Substrate-binding positions include Arg49, Lys60, Asp69, Arg72 to Gln76, Thr105 to Glu109, and Arg134. Cys160 and Cys193 are joined by a disulfide.

Homodimer.

Its subcellular location is the secreted. It catalyses the reaction chorismate = prephenate. Its pathway is metabolic intermediate biosynthesis; prephenate biosynthesis; prephenate from chorismate: step 1/1. Tyrosine, phenylalanine, and tryptophan moderately enhance chorismate mutase activity at low concentrations, but allosterically inhibit the enzyme at higher concentrations. Functionally, catalyzes the Claisen rearrangement of chorismate to prephenate. May play some role in the pathogenicity. The polypeptide is Secreted chorismate mutase (Mycobacterium tuberculosis (strain ATCC 25618 / H37Rv)).